Consider the following 519-residue polypeptide: Glucoamylase GLA1 (519 aa).

The N-terminal stretch at 1 to 27 is a signal peptide; sequence MRFGVLISVFVAIVSALPLQEGPLNKR. 2 N-linked (GlcNAc...) asparagine glycosylation sites follow: N115 and N127. A substrate-binding site is contributed by W166. An N-linked (GlcNAc...) asparagine glycan is attached at N205. The Proton acceptor role is filled by D234. The Proton donor role is filled by E237.

It belongs to the glycosyl hydrolase 15 family.

The enzyme catalyses Hydrolysis of terminal (1-&gt;4)-linked alpha-D-glucose residues successively from non-reducing ends of the chains with release of beta-D-glucose.. The chain is Glucoamylase GLA1 (GLA1) from Saccharomycopsis fibuligera (Yeast).